A 101-amino-acid chain; its full sequence is MAKVSSIQKNKSRQKKSQSLHNKRSELKSKIYDKSLSLEQRFPLIIALAQLPRNSSSTRIRNRCELTGRPRGVIRKFGISRNKLRELIGRGLVPGVVKASW.

The tract at residues 1-26 (MAKVSSIQKNKSRQKKSQSLHNKRSE) is disordered. Residues 10–22 (NKSRQKKSQSLHN) are compositionally biased toward basic residues.

It belongs to the universal ribosomal protein uS14 family. In terms of assembly, part of the 30S ribosomal subunit. Contacts proteins S3 and S10.

In terms of biological role, binds 16S rRNA, required for the assembly of 30S particles and may also be responsible for determining the conformation of the 16S rRNA at the A site. The polypeptide is Small ribosomal subunit protein uS14 (Rickettsia prowazekii (strain Madrid E)).